The sequence spans 206 residues: Ribosome maturation factor RimP (206 aa).

The interval 164–206 (GGIPEGRAVPSDAVDLTDDSGVDSVEDDEAELEDVENEEGFDK) is disordered. Residues 178–206 (DLTDDSGVDSVEDDEAELEDVENEEGFDK) show a composition bias toward acidic residues.

This sequence belongs to the RimP family.

The protein localises to the cytoplasm. In terms of biological role, required for maturation of 30S ribosomal subunits. The polypeptide is Ribosome maturation factor RimP (Rhodococcus erythropolis (strain PR4 / NBRC 100887)).